A 96-amino-acid polypeptide reads, in one-letter code: Cell division protein FtsB (96 aa).

Residues M1–I11 lie on the Cytoplasmic side of the membrane. The helical transmembrane segment at F12–F29 threads the bilayer. The Periplasmic portion of the chain corresponds to S30–K96.

It belongs to the FtsB family. As to quaternary structure, part of a complex composed of FtsB, FtsL and FtsQ.

It localises to the cell inner membrane. Essential cell division protein. May link together the upstream cell division proteins, which are predominantly cytoplasmic, with the downstream cell division proteins, which are predominantly periplasmic. This is Cell division protein FtsB from Francisella tularensis subsp. tularensis (strain SCHU S4 / Schu 4).